A 153-amino-acid polypeptide reads, in one-letter code: Small heat shock protein ibp (153 aa).

The sHSP domain occupies 35 to 153 (KIISDSVPPY…KIQKIQINVK (119 aa)).

The protein belongs to the small heat shock protein (HSP20) family.

The protein is Small heat shock protein ibp (ibp) of Buchnera aphidicola subsp. Thelaxes suberi.